Here is a 32-residue protein sequence, read N- to C-terminus: Alpha-conotoxin RgIA (32 aa).

Residues 1–19 (SNKRKNAAMLDMIAQHAIR) constitute a propeptide that is removed on maturation. Disulfide bonds link Cys21/Cys27 and Cys22/Cys31.

Belongs to the conotoxin A superfamily. The disulfide bond CysI-CysIII is important for alpha-9-alpha-10 subtype inhibition, whereas the bond CysII-CysIV contributes to GABA(B) modulation. In terms of tissue distribution, expressed by the venom duct.

The protein localises to the secreted. In terms of biological role, this toxin target two types of receptors, the nicotinic acetylcholine receptor (nAChR) and the G-protein-coupled receptor GABA(B). It specifically inhibits the alpha-9-alpha-10/CHRNA9-CHRNA10 nAChR, with preference for rat receptors. It interacts with the alpha-10(+)/alpha-9(-)interface of the receptor. It shows a two order of magnitude species difference potency for the rat versus human alpha-9-alpha-10 nAChR, due to the Thr-86 located in the alpha-9 nAChR subunit. This toxin also shows inhibition of high voltage-activated (HVA) calcium channels (Cav2.2) by acting on GABA(B) receptors (GABBR1 and GABBR2). In vivo, this toxin produces an acute antinociceptive effect in peripheral nerve-injured rats, which may be related to the inhibition of immune cell buildup at the site of nerve injury. In addition, when intramuscularly injected into rats following chronic constriction injury of the sciatic nerve, this toxin protects peripheral nervous tissues as well as prevents central maladaptive plasticity by inhibiting glial cell activation. The polypeptide is Alpha-conotoxin RgIA (Conus regius (Crown cone)).